Here is a 450-residue protein sequence, read N- to C-terminus: Methionine aminopeptidase 2-2 (450 aa).

Composition is skewed to basic and acidic residues over residues 1 to 10 (MGAKISEDHP) and 30 to 39 (RGAHLSRDGD). The segment at 1 to 100 (MGAKISEDHP…PPRVPLSELF (100 aa)) is disordered. Over residues 47–56 (GDDDDDDDEG) the composition is skewed to acidic residues. A compositionally biased stretch (basic residues) spans 69–86 (KKKKKKRKPKKKKAKKAT). His211 is a binding site for substrate. Asp232, Asp243, and His302 together coordinate a divalent metal cation. His310 lines the substrate pocket. A divalent metal cation-binding residues include Glu335 and Glu431.

Belongs to the peptidase M24A family. Methionine aminopeptidase eukaryotic type 2 subfamily. It depends on Co(2+) as a cofactor. Zn(2+) serves as cofactor. Requires Mn(2+) as cofactor. The cofactor is Fe(2+).

The protein localises to the cytoplasm. The catalysed reaction is Release of N-terminal amino acids, preferentially methionine, from peptides and arylamides.. Cotranslationally removes the N-terminal methionine from nascent proteins. The N-terminal methionine is often cleaved when the second residue in the primary sequence is small and uncharged (Met-Ala-, Cys, Gly, Pro, Ser, Thr, or Val). This chain is Methionine aminopeptidase 2-2, found in Fusarium vanettenii (strain ATCC MYA-4622 / CBS 123669 / FGSC 9596 / NRRL 45880 / 77-13-4) (Fusarium solani subsp. pisi).